Here is a 225-residue protein sequence, read N- to C-terminus: GTP cyclohydrolase 1 (225 aa).

The span at 1–12 shows a compositional bias: basic and acidic residues; the sequence is MERSKQSHDNQA. The interval 1-59 is disordered; the sequence is MERSKQSHDNQADSRPTTNESSLNGHFDGLVKKTPGMWDVKGRGTAGESSSHTGSSVVE. Polar residues-rich tracts occupy residues 13-24 and 47-58; these read DSRPTTNESSLN and GESSSHTGSSVV. Residues Cys-149, His-152, and Cys-220 each coordinate Zn(2+).

It belongs to the GTP cyclohydrolase I family. As to quaternary structure, toroid-shaped homodecamer, composed of two pentamers of five dimers.

It is found in the cytoplasm. The protein localises to the nucleus. It carries out the reaction GTP + H2O = 7,8-dihydroneopterin 3'-triphosphate + formate + H(+). The protein operates within cofactor biosynthesis; 7,8-dihydroneopterin triphosphate biosynthesis; 7,8-dihydroneopterin triphosphate from GTP: step 1/1. Its activity is regulated as follows. GTP shows a positive allosteric effect, and tetrahydrobiopterin inhibits the enzyme activity. Zinc is required for catalytic activity. Inhibited by Mg(2+). In terms of biological role, may positively regulate nitric oxide synthesis in endothelial cells. May be involved in dopamine synthesis. May modify pain sensitivity and persistence. The sequence is that of GTP cyclohydrolase 1 (gch1) from Oncorhynchus mykiss (Rainbow trout).